Reading from the N-terminus, the 551-residue chain is RCC1 and BTB domain-containing protein 2 (551 aa).

6 RCC1 repeats span residues 64-115 (NDEI…VLAT), 117-169 (DGEV…VLTS), 171-222 (GEVF…AVVD), 223-274 (TGEV…VLTD), 276-326 (GQIY…AAKT), and 328-382 (GGHV…TVAE). The region spanning 394 to 457 (ADLKFLVDGK…LYTDNISLSP (64 aa)) is the BTB domain.

As to expression, expressed in testis and heart (at protein level).

The protein resides in the cytoplasmic vesicle. Its subcellular location is the secretory vesicle. It is found in the acrosome. The sequence is that of RCC1 and BTB domain-containing protein 2 (Rcbtb2) from Mus musculus (Mouse).